Consider the following 247-residue polypeptide: Coproheme decarboxylase (247 aa).

Fe-coproporphyrin III is bound by residues Arg-129, 143-147 (YPMDK), His-170, Gln-183, and Ser-221. Tyr-143 is an active-site residue.

This sequence belongs to the ChdC family. Type 1 subfamily. Fe-coproporphyrin III serves as cofactor.

The catalysed reaction is Fe-coproporphyrin III + 2 H2O2 + 2 H(+) = heme b + 2 CO2 + 4 H2O. The enzyme catalyses Fe-coproporphyrin III + H2O2 + H(+) = harderoheme III + CO2 + 2 H2O. It carries out the reaction harderoheme III + H2O2 + H(+) = heme b + CO2 + 2 H2O. It participates in porphyrin-containing compound metabolism; protoheme biosynthesis. In terms of biological role, involved in coproporphyrin-dependent heme b biosynthesis. Catalyzes the decarboxylation of Fe-coproporphyrin III (coproheme) to heme b (protoheme IX), the last step of the pathway. The reaction occurs in a stepwise manner with a three-propionate intermediate. In Bacillus cereus (strain AH820), this protein is Coproheme decarboxylase.